A 472-amino-acid chain; its full sequence is Bifunctional protein HldE (472 aa).

The tract at residues 1-315 (MAKRVKILVV…QLLNSSFGAN (315 aa)) is ribokinase. 192–195 (NKKE) is an ATP binding site. D260 is a catalytic residue. Positions 340–472 (FTNGCFDILH…IKDAKNDDKK (133 aa)) are cytidylyltransferase.

This sequence in the N-terminal section; belongs to the carbohydrate kinase PfkB family. It in the C-terminal section; belongs to the cytidylyltransferase family. As to quaternary structure, homodimer.

It carries out the reaction D-glycero-beta-D-manno-heptose 7-phosphate + ATP = D-glycero-beta-D-manno-heptose 1,7-bisphosphate + ADP + H(+). It catalyses the reaction D-glycero-beta-D-manno-heptose 1-phosphate + ATP + H(+) = ADP-D-glycero-beta-D-manno-heptose + diphosphate. The protein operates within nucleotide-sugar biosynthesis; ADP-L-glycero-beta-D-manno-heptose biosynthesis; ADP-L-glycero-beta-D-manno-heptose from D-glycero-beta-D-manno-heptose 7-phosphate: step 1/4. It participates in nucleotide-sugar biosynthesis; ADP-L-glycero-beta-D-manno-heptose biosynthesis; ADP-L-glycero-beta-D-manno-heptose from D-glycero-beta-D-manno-heptose 7-phosphate: step 3/4. Functionally, catalyzes the phosphorylation of D-glycero-D-manno-heptose 7-phosphate at the C-1 position to selectively form D-glycero-beta-D-manno-heptose-1,7-bisphosphate. Its function is as follows. Catalyzes the ADP transfer from ATP to D-glycero-beta-D-manno-heptose 1-phosphate, yielding ADP-D-glycero-beta-D-manno-heptose. The polypeptide is Bifunctional protein HldE (Campylobacter concisus (strain 13826)).